The chain runs to 535 residues: CTP synthase (535 aa).

The tract at residues M1–V267 is amidoligase domain. S13 provides a ligand contact to CTP. Residue S13 participates in UTP binding. S14 to I19 is an ATP binding site. Y54 provides a ligand contact to L-glutamine. D71 provides a ligand contact to ATP. The Mg(2+) site is built by D71 and E141. Residues D148–E150, K188–Q193, and K224 each bind CTP. UTP is bound by residues K188–Q193 and K224. A Glutamine amidotransferase type-1 domain is found at K292–D535. G354 provides a ligand contact to L-glutamine. C381 acts as the Nucleophile; for glutamine hydrolysis in catalysis. L-glutamine contacts are provided by residues L382–Q385, E405, and R463. Active-site residues include H508 and E510.

This sequence belongs to the CTP synthase family. Homotetramer.

It catalyses the reaction UTP + L-glutamine + ATP + H2O = CTP + L-glutamate + ADP + phosphate + 2 H(+). It carries out the reaction L-glutamine + H2O = L-glutamate + NH4(+). The enzyme catalyses UTP + NH4(+) + ATP = CTP + ADP + phosphate + 2 H(+). The protein operates within pyrimidine metabolism; CTP biosynthesis via de novo pathway; CTP from UDP: step 2/2. Its activity is regulated as follows. Allosterically activated by GTP, when glutamine is the substrate; GTP has no effect on the reaction when ammonia is the substrate. The allosteric effector GTP functions by stabilizing the protein conformation that binds the tetrahedral intermediate(s) formed during glutamine hydrolysis. Inhibited by the product CTP, via allosteric rather than competitive inhibition. Functionally, catalyzes the ATP-dependent amination of UTP to CTP with either L-glutamine or ammonia as the source of nitrogen. Regulates intracellular CTP levels through interactions with the four ribonucleotide triphosphates. In Levilactobacillus brevis (strain ATCC 367 / BCRC 12310 / CIP 105137 / JCM 1170 / LMG 11437 / NCIMB 947 / NCTC 947) (Lactobacillus brevis), this protein is CTP synthase.